Reading from the N-terminus, the 543-residue chain is Periplasmic oligopeptide-binding protein OppA (543 aa).

Residues 1–26 form the signal peptide; the sequence is MSNITKKSLIAAGILTALIAASAATA. Cysteines 297 and 443 form a disulfide.

Belongs to the bacterial solute-binding protein 5 family. The complex is composed of two ATP-binding proteins (OppD and OppF), two transmembrane proteins (OppB and OppC) and a solute-binding protein (OppA).

It localises to the periplasm. In terms of biological role, part of the ABC transporter complex OppABCDF involved in the uptake of oligopeptides, including the cell wall murein tripeptide L-alanyl-gamma-D-glutamyl-meso-diaminopimelate. Plays an important nutritional role and is involved in the recycling of cell wall peptides. Binds peptides containing from two to five amino acid residues regardless of their sequence. Also binds cell wall peptides, such as L-alanyl-gamma-D-glutamyl-meso-diaminopimelate. The protein is Periplasmic oligopeptide-binding protein OppA of Salmonella typhimurium (strain LT2 / SGSC1412 / ATCC 700720).